The following is a 545-amino-acid chain: CTP synthase (545 aa).

The tract at residues Met-1–Ile-266 is amidoligase domain. Residue Ser-14 coordinates CTP. Ser-14 is a binding site for UTP. ATP contacts are provided by residues Ser-15–Ile-20 and Asp-72. Residues Asp-72 and Glu-140 each coordinate Mg(2+). Residues Asp-147–Glu-149, Lys-187–Gln-192, and Lys-223 each bind CTP. UTP-binding positions include Lys-187–Gln-192 and Lys-223. ATP is bound at residue Lys-239–Val-241. Positions Thr-291 to Arg-542 constitute a Glutamine amidotransferase type-1 domain. Gly-352 provides a ligand contact to L-glutamine. Cys-379 functions as the Nucleophile; for glutamine hydrolysis in the catalytic mechanism. L-glutamine contacts are provided by residues Leu-380–Gln-383, Glu-403, and Arg-470. Catalysis depends on residues His-515 and Glu-517.

It belongs to the CTP synthase family. As to quaternary structure, homotetramer.

It carries out the reaction UTP + L-glutamine + ATP + H2O = CTP + L-glutamate + ADP + phosphate + 2 H(+). It catalyses the reaction L-glutamine + H2O = L-glutamate + NH4(+). The catalysed reaction is UTP + NH4(+) + ATP = CTP + ADP + phosphate + 2 H(+). The protein operates within pyrimidine metabolism; CTP biosynthesis via de novo pathway; CTP from UDP: step 2/2. Allosterically activated by GTP, when glutamine is the substrate; GTP has no effect on the reaction when ammonia is the substrate. The allosteric effector GTP functions by stabilizing the protein conformation that binds the tetrahedral intermediate(s) formed during glutamine hydrolysis. Inhibited by the product CTP, via allosteric rather than competitive inhibition. In terms of biological role, catalyzes the ATP-dependent amination of UTP to CTP with either L-glutamine or ammonia as the source of nitrogen. Regulates intracellular CTP levels through interactions with the four ribonucleotide triphosphates. The polypeptide is CTP synthase (Shewanella sediminis (strain HAW-EB3)).